A 114-amino-acid chain; its full sequence is Reprimo-like protein (114 aa).

Residues 61 to 81 (VVQIAVLCVLSLTVMFGIFFL) form a helical membrane-spanning segment.

The protein belongs to the reprimo family.

Its subcellular location is the membrane. This is Reprimo-like protein (rprml) from Danio rerio (Zebrafish).